The chain runs to 159 residues: Phosphopantetheine adenylyltransferase (159 aa).

Ser9 provides a ligand contact to substrate. ATP contacts are provided by residues 9–10 and His17; that span reads SF. The substrate site is built by Lys41, Leu73, and Lys87. Residues 88 to 90, Glu98, and 122 to 128 each bind ATP; these read GLR and YSFLSSS.

It belongs to the bacterial CoaD family. As to quaternary structure, homohexamer. The cofactor is Mg(2+).

It localises to the cytoplasm. The catalysed reaction is (R)-4'-phosphopantetheine + ATP + H(+) = 3'-dephospho-CoA + diphosphate. The protein operates within cofactor biosynthesis; coenzyme A biosynthesis; CoA from (R)-pantothenate: step 4/5. In terms of biological role, reversibly transfers an adenylyl group from ATP to 4'-phosphopantetheine, yielding dephospho-CoA (dPCoA) and pyrophosphate. This Streptomyces griseus subsp. griseus (strain JCM 4626 / CBS 651.72 / NBRC 13350 / KCC S-0626 / ISP 5235) protein is Phosphopantetheine adenylyltransferase.